A 782-amino-acid chain; its full sequence is Cleavage and polyadenylation specificity factor subunit 2 (782 aa).

Residues 407-416 (KKLEQSKEAD) show a composition bias toward basic and acidic residues. Residues 407–449 (KKLEQSKEADIDSSDESDIEEDIDQPSAHKTKHDLMMKGEGSR) form a disordered region. A compositionally biased stretch (acidic residues) spans 417-430 (IDSSDESDIEEDID). A phosphoserine mark is found at Ser419, Ser420, and Ser423. A compositionally biased stretch (basic and acidic residues) spans 439–449 (HDLMMKGEGSR). Ser660 is modified (phosphoserine).

This sequence belongs to the metallo-beta-lactamase superfamily. RNA-metabolizing metallo-beta-lactamase-like family. CPSF2/YSH1 subfamily. As to quaternary structure, component of the cleavage and polyadenylation specificity factor (CPSF) complex, composed of CPSF1, CPSF2, CPSF3, CPSF4 and FIP1L1. Interacts with CPSF3, CSTF2 and SYMPK. Interacts with ZC3H3.

The protein localises to the nucleus. Its function is as follows. Component of the cleavage and polyadenylation specificity factor (CPSF) complex that play a key role in pre-mRNA 3'-end formation, recognizing the AAUAAA signal sequence and interacting with poly(A) polymerase and other factors to bring about cleavage and poly(A) addition. Involved in the histone 3' end pre-mRNA processing. The chain is Cleavage and polyadenylation specificity factor subunit 2 (CPSF2) from Homo sapiens (Human).